Reading from the N-terminus, the 221-residue chain is Membrane protein 0 (221 aa).

The tract at residues 1–22 (MATVHYSRRPGTPPVTLTSSPG) is disordered. A PPXY motif motif is present at residues 44–47 (PPPY). A helical membrane pass occupies residues 100–120 (FLILFGILTLTAVVVAIVAVF).

This sequence belongs to the varicellovirus ORF0 protein family. As to quaternary structure, interacts with host ITCH; this interaction probably mediates ITCH degradation.

Its subcellular location is the host Golgi apparatus membrane. The protein is Membrane protein 0 of Homo sapiens (Human).